Reading from the N-terminus, the 196-residue chain is Putative NADH dehydrogenase/NAD(P)H nitroreductase Pnuc_0932 (196 aa).

This sequence belongs to the nitroreductase family. HadB/RutE subfamily. It depends on FMN as a cofactor.

This Polynucleobacter asymbioticus (strain DSM 18221 / CIP 109841 / QLW-P1DMWA-1) (Polynucleobacter necessarius subsp. asymbioticus) protein is Putative NADH dehydrogenase/NAD(P)H nitroreductase Pnuc_0932.